The chain runs to 175 residues: UPF0398 protein SPD_0338 (175 aa).

It belongs to the UPF0398 family.

This Streptococcus pneumoniae serotype 2 (strain D39 / NCTC 7466) protein is UPF0398 protein SPD_0338.